The primary structure comprises 127 residues: Large ribosomal subunit protein bL19 (127 aa).

This sequence belongs to the bacterial ribosomal protein bL19 family.

Functionally, this protein is located at the 30S-50S ribosomal subunit interface and may play a role in the structure and function of the aminoacyl-tRNA binding site. The polypeptide is Large ribosomal subunit protein bL19 (Roseobacter denitrificans (strain ATCC 33942 / OCh 114) (Erythrobacter sp. (strain OCh 114))).